The primary structure comprises 215 residues: MOB kinase activator-like 1A (215 aa).

The tract at residues 1-27 is disordered; that stretch reads MSLFGLGRNQKTFRPKKSAPSGSKGAQ. Zn(2+) contacts are provided by cysteine 79, cysteine 84, histidine 161, and histidine 166.

Belongs to the MOB1/phocein family. Interacts with SIK1 at the plasma membrane and in the nucleus. Constitutively expressed. In 3- to 4-day-old seedlings, expression is high in the shoot apical meristem and along the vasculature in cotyledons, hypocotyls and roots. At the root tip, expression is detected in columella and lateral root cap cells as well as in the stem cell niche around the quiescent center (QC). The levels of expression decrease progressively in the meristematic zone from the root tip towards the base of the root, becoming stronger again in the elongation zone. In flowers, expression appears localized in ovules and pollen.

The protein resides in the nucleus. The protein localises to the cell membrane. It is found in the vacuole membrane. Functionally, plays a key role in regulation of cell expansion and cell division. Required for proper plant development, the correct patterning of the root meristem and the control of root growth. Involved in both sporogenesis and gametogenesis. The sequence is that of MOB kinase activator-like 1A from Arabidopsis thaliana (Mouse-ear cress).